The chain runs to 336 residues: 3-isopropylmalate dehydrogenase (336 aa).

Residues R87, R97, R121, and D211 each coordinate substrate. Mg(2+)-binding residues include D211, D235, and D239. An NAD(+)-binding site is contributed by 271–283 (GSAPDIAGQGIAD).

Belongs to the isocitrate and isopropylmalate dehydrogenases family. LeuB type 2 subfamily. In terms of assembly, homodimer. Mg(2+) serves as cofactor. Mn(2+) is required as a cofactor.

It localises to the cytoplasm. The enzyme catalyses (2R,3S)-3-isopropylmalate + NAD(+) = 4-methyl-2-oxopentanoate + CO2 + NADH. It functions in the pathway amino-acid biosynthesis; L-leucine biosynthesis; L-leucine from 3-methyl-2-oxobutanoate: step 3/4. Functionally, catalyzes the oxidation of 3-carboxy-2-hydroxy-4-methylpentanoate (3-isopropylmalate) to 3-carboxy-4-methyl-2-oxopentanoate. The product decarboxylates to 4-methyl-2 oxopentanoate. This Mycobacterium sp. (strain JLS) protein is 3-isopropylmalate dehydrogenase.